The chain runs to 228 residues: Ribose-5-phosphate isomerase A (228 aa).

Residues 26 to 29 (SGST), 81 to 84 (DGAD), and 94 to 97 (KGGG) each bind substrate. The Proton acceptor role is filled by E103. K121 contributes to the substrate binding site.

This sequence belongs to the ribose 5-phosphate isomerase family. Homodimer.

It catalyses the reaction aldehydo-D-ribose 5-phosphate = D-ribulose 5-phosphate. It functions in the pathway carbohydrate degradation; pentose phosphate pathway; D-ribose 5-phosphate from D-ribulose 5-phosphate (non-oxidative stage): step 1/1. Catalyzes the reversible conversion of ribose-5-phosphate to ribulose 5-phosphate. The polypeptide is Ribose-5-phosphate isomerase A (Shouchella clausii (strain KSM-K16) (Alkalihalobacillus clausii)).